Reading from the N-terminus, the 404-residue chain is Protein ORF23 (404 aa).

The protein belongs to the lymphocryptovirus BTRF1 family. Interacts with ORF34.

The protein resides in the host nucleus. The protein localises to the host cytoplasm. Functionally, plays a role in the expression of late genes. This is Protein ORF23 (ORF23) from Homo sapiens (Human).